Consider the following 182-residue polypeptide: Core-binding factor subunit beta (182 aa).

Alanine 173 is modified (phosphoserine).

It belongs to the CBF-beta family. In terms of assembly, heterodimer with RUNX1, RUNX2 and RUNX3. Interacts with COPRS. Found in a complex with PRMT5 and RUNX1. (Microbial infection) Interacts with HIV-1 Vif; forming an active cullin-5-RING E3 ubiquitin-protein ligase complex (ECS complex).

The protein resides in the nucleus. In terms of biological role, forms the heterodimeric complex core-binding factor (CBF) with RUNX family proteins (RUNX1, RUNX2, and RUNX3). RUNX members modulate the transcription of their target genes through recognizing the core consensus binding sequence 5'-TGTGGT-3', or very rarely, 5'-TGCGGT-3', within their regulatory regions via their runt domain, while CBFB is a non-DNA-binding regulatory subunit that allosterically enhances the sequence-specific DNA-binding capacity of RUNX. The heterodimers bind to the core site of a number of enhancers and promoters, including murine leukemia virus, polyomavirus enhancer, T-cell receptor enhancers, LCK, IL3 and GM-CSF promoters. CBF complexes repress ZBTB7B transcription factor during cytotoxic (CD8+) T cell development. They bind to RUNX-binding sequence within the ZBTB7B locus acting as transcriptional silencer and allowing for cytotoxic T cell differentiation. Functionally, (Microbial infection) Following infection, hijacked by the HIV-1 Vif protein, leading to the formation a cullin-5-RING E3 ubiquitin-protein ligase complex (ECS complex) that catalyzes ubiquitination and degradation of APOBEC3F and APOBEC3G. The complex can also ubiquitinate APOBEC3H to some extent. Association with HIV-1 Vif protein also inhibits the transcription coactivator activity of CBFB/CBF-beta. This is Core-binding factor subunit beta (CBFB) from Homo sapiens (Human).